Reading from the N-terminus, the 206-residue chain is Guanylate kinase (206 aa).

Residues 7–185 (GIVLVLCAPS…AYDELRAAYL (179 aa)) enclose the Guanylate kinase-like domain. 14–21 (APSGTGKT) contacts ATP.

Belongs to the guanylate kinase family.

The protein localises to the cytoplasm. It catalyses the reaction GMP + ATP = GDP + ADP. Functionally, essential for recycling GMP and indirectly, cGMP. This Oleidesulfovibrio alaskensis (strain ATCC BAA-1058 / DSM 17464 / G20) (Desulfovibrio alaskensis) protein is Guanylate kinase.